Consider the following 396-residue polypeptide: Flavohemoprotein (396 aa).

One can recognise a Globin domain in the interval 1–136 (MLDAQTIATV…LANVFINREA (136 aa)). A heme b-binding site is contributed by His85. Catalysis depends on charge relay system residues Tyr95 and Glu135. The segment at 147–396 (GGWEGTRDFR…YECFGPHKVL (250 aa)) is reductase. In terms of domain architecture, FAD-binding FR-type spans 150–255 (EGTRDFRIVA…VAPAGDFFMA (106 aa)). FAD is bound by residues Tyr188 and 204 to 207 (RQYS). 268–273 (GVGQTP) serves as a coordination point for NADP(+). 389–392 (CFGP) provides a ligand contact to FAD.

This sequence belongs to the globin family. Two-domain flavohemoproteins subfamily. The protein in the C-terminal section; belongs to the flavoprotein pyridine nucleotide cytochrome reductase family. The cofactor is heme b. It depends on FAD as a cofactor.

The enzyme catalyses 2 nitric oxide + NADPH + 2 O2 = 2 nitrate + NADP(+) + H(+). It catalyses the reaction 2 nitric oxide + NADH + 2 O2 = 2 nitrate + NAD(+) + H(+). In terms of biological role, is involved in NO detoxification in an aerobic process, termed nitric oxide dioxygenase (NOD) reaction that utilizes O(2) and NAD(P)H to convert NO to nitrate, which protects the bacterium from various noxious nitrogen compounds. Therefore, plays a central role in the inducible response to nitrosative stress. This chain is Flavohemoprotein, found in Escherichia coli O6:H1 (strain CFT073 / ATCC 700928 / UPEC).